The following is a 373-amino-acid chain: ATP phosphoribosyltransferase regulatory subunit (373 aa).

This sequence belongs to the class-II aminoacyl-tRNA synthetase family. HisZ subfamily. As to quaternary structure, heteromultimer composed of HisG and HisZ subunits.

The protein localises to the cytoplasm. The protein operates within amino-acid biosynthesis; L-histidine biosynthesis; L-histidine from 5-phospho-alpha-D-ribose 1-diphosphate: step 1/9. Functionally, required for the first step of histidine biosynthesis. May allow the feedback regulation of ATP phosphoribosyltransferase activity by histidine. The chain is ATP phosphoribosyltransferase regulatory subunit from Rhizobium etli (strain CIAT 652).